A 1446-amino-acid chain; its full sequence is Toll-like receptor 7 (1446 aa).

The N-terminal stretch at 1 to 16 (MAAILLLLLGFSWSLA) is a signal peptide. Residues 17–1049 (VESALAPKES…QHGIPESYIP (1033 aa)) are Extracellular-facing. LRR repeat units follow at residues 133 to 156 (LQTL…AFEG), 158 to 180 (ATLK…TLEL), 188 to 211 (LKQL…FLCP), 213 to 235 (GNLQ…GFAD), 246 to 270 (GSEL…GISR), 271 to 294 (LRRL…ALAG), 295 to 318 (LASL…LFAG), 320 to 342 (KELR…LFHR), 344 to 368 (EQLL…TFAG), 369 to 392 (LIRL…TFKE), 393 to 416 (LYFL…AFLP), 417 to 440 (LYNL…LFNG), 442 to 464 (YVLS…VFKN), 465 to 488 (CSDL…LQDL), 489 to 511 (AMLR…SFKN), 513 to 535 (HQLT…MFQD), 536 to 559 (LPRL…SFDK), 561 to 582 (FELE…VFAT), 584 to 605 (VSLL…AFIP), 606 to 629 (SNLK…KLQE), 631 to 652 (IRVK…MSIP), 653 to 675 (NTIE…AFVD), and 677 to 699 (ANLA…QLRV). An LRRCT domain is found at 716 to 773 (NPFECDCTMDWLQRINNLTTRQHPRVMDMANIECVMPHARGAAVRPLSGLRPQDFLCR). 3 disulfide bridges follow: Cys722-Cys772, Cys796-Cys802, and Cys800-Cys815. LRR repeat units follow at residues 828–851 (PMDS…AFIG), 852–875 (RKNL…TFAS), 876–899 (LASL…EFEQ), 900–923 (LSAL…TLAP), 925–947 (AALE…QMHA), and 951–979 (GTRL…SYVA). An intrachain disulfide couples Cys966 to Cys993. Residues 1050–1070 (LLAAALALLFLLVVIAMVFAF) form a helical membrane-spanning segment. The Cytoplasmic segment spans residues 1071–1446 (RESLRIWLFA…QGPHVQAYLV (376 aa)). The 138-residue stretch at 1096–1233 (KLYDAVLLHS…HFWEKLRYAL (138 aa)) folds into the TIR domain. Disordered stretches follow at residues 1301-1332 (QNYS…NHHL) and 1388-1446 (RPKR…AYLV). Polar residues predominate over residues 1395–1413 (HLQQAQAGTLGSKASQAAH). The span at 1414–1426 (QQQQQQQQQQQQQ) shows a compositional bias: low complexity. Over residues 1427–1439 (PNPTAVSGQQQGP) the composition is skewed to polar residues.

The protein belongs to the Toll-like receptor family. Expressed in the fan-shaped body and the ellipsoid body, which are components of the locomotion center in the CNS (at protein level).

It localises to the cell membrane. In terms of biological role, toll-related receptor which binds to the neurotrophins NT1 and spz5. Essential for antiviral autophagy, it detects and binds to the vesicular stomatitis virus (vsv) following infection. This role is likely to be independent of the canonical Toll, immune deficiency, and JAK-STAT signaling pathways. Functions in olfactory circuit assembly by promoting synaptic partner matching between olfactory receptor neurons (ORN) axons and projection neurons (PN) dendrites partners in the antennal lobe. Function in the Va1d ORNs is necessary and sufficient for correct targeting to their partner PN dendrites. Also involved in the targeting of other classes of ORN axons. Functions with Toll-6 to regulate motor axon targeting and neuronal survival in the central nervous system (CNS). May be an upstream component of the NF-kappa-B (rel) regulatory cascade. The polypeptide is Toll-like receptor 7 (Drosophila melanogaster (Fruit fly)).